The primary structure comprises 316 residues: Meiotically up-regulated gene 154 protein (316 aa).

The next 4 helical transmembrane spans lie at 41-61 (YSIP…IYIK), 88-108 (AFLS…FIFS), 159-179 (FLLN…WFYS), and 186-206 (LLTF…SLLL). Residues 291–316 (HDSGISRDSSSPFKRFPHLSDGSSRF) form a disordered region.

It is found in the endoplasmic reticulum membrane. Functionally, has a role in meiosis. The polypeptide is Meiotically up-regulated gene 154 protein (mug154) (Schizosaccharomyces pombe (strain 972 / ATCC 24843) (Fission yeast)).